We begin with the raw amino-acid sequence, 244 residues long: Tetraspanin-7 (244 aa).

Topologically, residues 1-11 (METKPVITCLK) are cytoplasmic. Residues 12-35 (TLLIIYSFVFWITGVILLAVGVWG) form a helical membrane-spanning segment. Residues 36-51 (KLTLGTYISLIAENST) lie on the Extracellular side of the membrane. N-linked (GlcNAc...) asparagine glycosylation is present at Asn-49. Residues 52–70 (NAPYVLIGTGTTIVVFGLF) traverse the membrane as a helical segment. At 71–81 (GCFATCRGSPW) the chain is on the cytoplasmic side. A helical transmembrane segment spans residues 82–107 (MLKLYAMFLSLVFLAELVAGISGFVF). Residues 108 to 208 (RHEIKDTFLR…LVTSFMETNM (101 aa)) are Extracellular-facing. N-linked (GlcNAc...) asparagine glycans are attached at residues Asn-150, Asn-153, Asn-172, and Asn-183. Residues 209 to 229 (GIIAGVAFGIAFSQLIGMLLA) traverse the membrane as a helical segment. The Cytoplasmic segment spans residues 230–244 (CCLSRFITANQYEMV).

Belongs to the tetraspanin (TM4SF) family.

It is found in the membrane. May be involved in cell proliferation and cell motility. The sequence is that of Tetraspanin-7 (TSPAN7) from Pongo pygmaeus (Bornean orangutan).